The sequence spans 275 residues: Large ribosomal subunit protein uL2 (275 aa).

Disordered stretches follow at residues 1–55 and 218–275; these read MGIR…RHRG and PHVR…RRRR. The segment covering 259 to 275 has biased composition (basic residues); the sequence is TRNKKKASSRLIVRRRR.

Belongs to the universal ribosomal protein uL2 family. As to quaternary structure, part of the 50S ribosomal subunit. Forms a bridge to the 30S subunit in the 70S ribosome.

Functionally, one of the primary rRNA binding proteins. Required for association of the 30S and 50S subunits to form the 70S ribosome, for tRNA binding and peptide bond formation. It has been suggested to have peptidyltransferase activity; this is somewhat controversial. Makes several contacts with the 16S rRNA in the 70S ribosome. In Crocosphaera subtropica (strain ATCC 51142 / BH68) (Cyanothece sp. (strain ATCC 51142)), this protein is Large ribosomal subunit protein uL2.